Consider the following 399-residue polypeptide: Beta-1,4-galactosyltransferase 1 (399 aa).

At Met-1 to Arg-24 the chain is on the cytoplasmic side. Residues Leu-25–Gly-44 form a helical; Signal-anchor for type II membrane protein membrane-spanning segment. Residues Arg-45–Arg-399 are Lumenal-facing. The disordered stretch occupies residues Gln-61–Asn-113. Over residues Ala-82–Arg-95 the composition is skewed to pro residues. Asn-113 is a glycosylation site (N-linked (GlcNAc...) asparagine). Cys-131 and Cys-173 form a disulfide bridge. UDP-alpha-D-galactose is bound by residues Pro-184–Arg-188, Phe-223–Arg-225, Val-250–Asp-251, and Trp-311. Cys-244 and Cys-263 are oxidised to a cystine. A Mn(2+)-binding site is contributed by Asp-251. Gly-313–Asp-316 contributes to the N-acetyl-D-glucosamine binding site. His-344 is a Mn(2+) binding site. His-344–Arg-346 contributes to the UDP-alpha-D-galactose binding site. Arg-356 is a binding site for N-acetyl-D-glucosamine.

It belongs to the glycosyltransferase 7 family. In terms of assembly, homodimer; and heterodimer with alpha-lactalbumin to form lactose synthase. Interacts (via N-terminal cytoplasmic domain) with UBE2Q1 (via N-terminus); the interaction is direct. The cofactor is Mn(2+). Post-translationally, the soluble form derives from the membrane forms by proteolytic processing.

It localises to the golgi apparatus. Its subcellular location is the golgi stack membrane. The protein resides in the cell membrane. It is found in the cell surface. The protein localises to the cell projection. It localises to the filopodium. Its subcellular location is the secreted. It catalyses the reaction D-glucose + UDP-alpha-D-galactose = lactose + UDP + H(+). It carries out the reaction an N-acetyl-beta-D-glucosaminyl derivative + UDP-alpha-D-galactose = a beta-D-galactosyl-(1-&gt;4)-N-acetyl-beta-D-glucosaminyl derivative + UDP + H(+). The catalysed reaction is N-acetyl-D-glucosamine + UDP-alpha-D-galactose = beta-D-galactosyl-(1-&gt;4)-N-acetyl-D-glucosamine + UDP + H(+). The enzyme catalyses a beta-D-GlcNAc-(1-&gt;3)-beta-D-Gal-(1-&gt;4)-beta-D-Glc-(1&lt;-&gt;1)-Cer(d18:1(4E)) + UDP-alpha-D-galactose = a neolactoside nLc4Cer(d18:1(4E)) + UDP + H(+). It catalyses the reaction a beta-D-glucosylceramide + UDP-alpha-D-galactose = a beta-D-galactosyl-(1-&gt;4)-beta-D-glucosyl-(1&lt;-&gt;1)-ceramide + UDP + H(+). It carries out the reaction a neolactoside IV(3)-beta-GlcNAc-nLc4Cer + UDP-alpha-D-galactose = a neolactoside nLc6Cer + UDP + H(+). Its pathway is protein modification; protein glycosylation. Its function is as follows. The Golgi complex form catalyzes the production of lactose in the lactating mammary gland and could also be responsible for the synthesis of complex-type N-linked oligosaccharides in many glycoproteins as well as the carbohydrate moieties of glycolipids. The cell surface form functions as a recognition molecule during a variety of cell to cell and cell to matrix interactions, as those occurring during development and egg fertilization, by binding to specific oligosaccharide ligands on opposing cells or in the extracellular matrix. The secreted form is responsible for the synthesis of complex-type to N-linked oligosaccharides in many glycoproteins as well as the carbohydrate moieties of glycolipids. The polypeptide is Beta-1,4-galactosyltransferase 1 (Mus musculus (Mouse)).